Here is a 207-residue protein sequence, read N- to C-terminus: Gene 66 protein (207 aa).

This is Gene 66 protein (66) from Mycobacterium (Mycobacteriophage L5).